Reading from the N-terminus, the 230-residue chain is MTSQDALKKQAAEKAVEYLESGMVVGLGSGSTATFAIHAIARLMKEGKLKDIVGIPSSTPTEEVARSLGIPLVGFEEHAVIDVTIDGADEVDPDLNLIKGGGGALLREKVVAQATKKNIIIVDESKISDKLGTIFALPVEVVPFATASETRFLESLGAKVTVRENQLGKAFKTDNHNRILDADFGPMDDAVKIGMALSQRAGVVEHGLFLGTTALVIVAGADGIREMKAA.

Substrate-binding positions include 29 to 32 (SGST), 86 to 89 (DGAD), and 99 to 102 (KGGG). The Proton acceptor role is filled by glutamate 108. Lysine 126 provides a ligand contact to substrate.

The protein belongs to the ribose 5-phosphate isomerase family. Homodimer.

It catalyses the reaction aldehydo-D-ribose 5-phosphate = D-ribulose 5-phosphate. The protein operates within carbohydrate degradation; pentose phosphate pathway; D-ribose 5-phosphate from D-ribulose 5-phosphate (non-oxidative stage): step 1/1. Its function is as follows. Catalyzes the reversible conversion of ribose-5-phosphate to ribulose 5-phosphate. This Desulfatibacillum aliphaticivorans protein is Ribose-5-phosphate isomerase A.